A 605-amino-acid polypeptide reads, in one-letter code: MSDYFSKLKEHVVESTEINGCTPSIATATFNAPYEVARKTKMLGVTDSSLLNLPAWKRLQSLYEKYGNDSILSHFEKDHQRFQRYSIEIDLHSDDNFLFLDYSKSHINDEIKDALVALAEERGVRAFAKAMFDGQRVNSTENRAVLHVALRNRSNRPIIVDGKDVMSDVNNVLAQMKDFTERVRSGEWKGQTGKSIYNIVNIGIGGSDLGPVMVTEALKPFSKRDLHCFFVSNVDGTHMAEVLKQVNLEETIFIIASKTFTTQETLTNAMSARNALMSYLKENGISTDGAVAKHFVALSTNTEKVREFGIDTVNMFAFWDWVGGRYSVWSAIGLSVMLSIGYDNFVEFLTGAHVMDNHFASTPTEQNLPMMLALVGIWYNNFFGSETQAVLPYDQYLWRLPAYLQQLDMESNGKGVTKKSGAVAVQTGPIVFGEAGTNGQHAFYQLIHQGTKIIPCDFIGCVQTQNRVGDHHRTLMSNFFAQTEALMVGKNAEEVRQELVKSGMSGDAIENMIPHKTFTGSRPSNSILVNALTPRALGAIIAMYEHKVLVQGAIWGINSYDQWGVELGKVLAKSILPQLKSGNIVSDHDGSTNGLINMFNTRAHL.

The Proton donor role is filled by glutamate 410. Residues histidine 441 and lysine 569 contribute to the active site.

This sequence belongs to the GPI family.

Its subcellular location is the cytoplasm. The catalysed reaction is alpha-D-glucose 6-phosphate = beta-D-fructose 6-phosphate. It participates in carbohydrate degradation; glycolysis; D-glyceraldehyde 3-phosphate and glycerone phosphate from D-glucose: step 2/4. This Leishmania mexicana protein is Glucose-6-phosphate isomerase (PGI).